Here is a 233-residue protein sequence, read N- to C-terminus: 2,3,4,5-tetrahydropyridine-2,6-dicarboxylate N-acetyltransferase (233 aa).

The protein belongs to the transferase hexapeptide repeat family. DapH subfamily.

It catalyses the reaction (S)-2,3,4,5-tetrahydrodipicolinate + acetyl-CoA + H2O = L-2-acetamido-6-oxoheptanedioate + CoA. It functions in the pathway amino-acid biosynthesis; L-lysine biosynthesis via DAP pathway; LL-2,6-diaminopimelate from (S)-tetrahydrodipicolinate (acetylase route): step 1/3. Functionally, catalyzes the transfer of an acetyl group from acetyl-CoA to tetrahydrodipicolinate. In Thermotoga petrophila (strain ATCC BAA-488 / DSM 13995 / JCM 10881 / RKU-1), this protein is 2,3,4,5-tetrahydropyridine-2,6-dicarboxylate N-acetyltransferase.